Here is an 86-residue protein sequence, read N- to C-terminus: Mu-theraphotoxin-Hhn1b 1 (86 aa).

Positions 1 to 21 (MKASMFLALAGLALLFVVCYA) are cleaved as a signal peptide. Positions 22–49 (SESEEKEFSNELLSSVLAVDDNSKGEER) are excised as a propeptide. Cystine bridges form between cysteine 51/cysteine 66, cysteine 58/cysteine 73, and cysteine 65/cysteine 80. Isoleucine 84 is subject to Isoleucine amide.

It belongs to the neurotoxin 10 (Hwtx-1) family. 22 (Htx-4) subfamily. Monomer. As to expression, expressed by the venom gland.

The protein resides in the secreted. Neurotoxin that selectively inhibits neuronal tetrodotoxin-sensitive voltage-gated sodium channels (Nav) (IC(50)=44.6 nM). It is active on Nav1.2/SCN2A (IC(50)=22.4 nM), Nav1.6/SCN8A (IC(50)=50.1 nM) and Nav1.7/SCN9A (IC(50)=48.9 nM). It shows low affinity for lipid bilayers. The protein is Mu-theraphotoxin-Hhn1b 1 of Cyriopagopus hainanus (Chinese bird spider).